Reading from the N-terminus, the 178-residue chain is Inorganic pyrophosphatase (178 aa).

The substrate site is built by K30, R44, and Y56. Residues D66, D71, and D103 each coordinate Mg(2+). Position 140 (Y140) interacts with substrate.

It belongs to the PPase family. In terms of assembly, homohexamer. Requires Mg(2+) as cofactor.

Its subcellular location is the cytoplasm. The enzyme catalyses diphosphate + H2O = 2 phosphate + H(+). Functionally, catalyzes the hydrolysis of inorganic pyrophosphate (PPi) forming two phosphate ions. The sequence is that of Inorganic pyrophosphatase from Pyrococcus horikoshii (strain ATCC 700860 / DSM 12428 / JCM 9974 / NBRC 100139 / OT-3).